The primary structure comprises 2000 residues: Sodium channel protein type 3 subunit alpha (2000 aa).

Over 1–128 the chain is Cytoplasmic; that stretch reads MAQALLVPPG…KIAIKILVHS (128 aa). Residues 28-60 form a disordered region; it reads RAAEEKAKKPKKEQDNDDENKPKPNSDLEAGKN. Residues 46–57 are compositionally biased toward basic and acidic residues; that stretch reads ENKPKPNSDLEA. An I repeat occupies 110–455; that stretch reads ILTPLNPVRK…QQMLEQLKKQ (346 aa). The helical transmembrane segment at 129–146 threads the bilayer; it reads LFSMLIMCTILTNCVFMT. At 147 to 152 the chain is on the extracellular side; sequence LSNPPD. The helical transmembrane segment at 153 to 174 threads the bilayer; the sequence is WTKNVEYTFTGIYTFESLIKIL. At 175–188 the chain is on the cytoplasmic side; the sequence is ARGFCLEDFTFLRD. The helical transmembrane segment at 189-206 threads the bilayer; it reads PWNWLDFSVIVMAYVTEF. At 207 to 213 the chain is on the extracellular side; it reads VSLGNVS. Asn-211 carries an N-linked (GlcNAc...) asparagine glycan. A helical membrane pass occupies residues 214–235; sequence ALRTFRVLRALKTISVIPGLKT. The Cytoplasmic portion of the chain corresponds to 236–249; the sequence is IVGALIQSVKKLSD. A helical membrane pass occupies residues 250 to 269; sequence VMILTVFCLSVFALIGLQLF. The Extracellular segment spans residues 270-369; that stretch reads MGNLRNKCLQ…NYGYTSFDTF (100 aa). N-linked (GlcNAc...) asparagine glycosylation is found at Asn-290, Asn-296, Asn-302, Asn-307, and Asn-339. Positions 370–386 form an intramembrane region, pore-forming; it reads SWAFLSLFRLMTQDYWE. Topologically, residues 387–397 are extracellular; it reads NLYQLTLRAAG. A helical transmembrane segment spans residues 398–424; it reads KTYMIFFVLVIFLGSFYLVNLILAVVA. Residues 425-761 lie on the Cytoplasmic side of the membrane; that stretch reads MAYEEQNQAT…LVNLIVMDPF (337 aa). A phosphoserine mark is found at Ser-484, Ser-485, and Ser-486. Disordered regions lie at residues 493-528, 587-631, and 662-681; these read SKSAKEWRNRRKKRRQREHLEGNNKGERDSFPKSES, VGSE…ASMS, and ALTSPTGQLPPEGTTTETEV. Basic residues predominate over residues 500-509; it reads RNRRKKRRQR. Basic and acidic residues-rich tracts occupy residues 510–528 and 596–610; these read EHLEGNNKGERDSFPKSES and DEHSTFEDSESRRDS. A compositionally biased stretch (polar residues) spans 662-678; it reads ALTSPTGQLPPEGTTTE. The II repeat unit spans residues 742-1014; it reads CCDAWLKVKH…QIAVGRMQKG (273 aa). Residues 762–779 form a helical membrane-spanning segment; that stretch reads VDLAITICIVLNTLFMAM. Residues 780-787 are Extracellular-facing; the sequence is EHYPMTEQ. A helical membrane pass occupies residues 788-812; the sequence is FSSVLTVGNLVFTGIFTAEMVLKII. Residues 813–822 are Cytoplasmic-facing; that stretch reads AMDPYYYFQE. A helical membrane pass occupies residues 823-842; it reads GWNIFDGIIVSLSLMELGLS. The Extracellular segment spans residues 843–846; it reads NVEG. The chain crosses the membrane as a helical span at residues 847–865; it reads LSVLRSFRLLRVFKLAKSW. Over 866 to 883 the chain is Cytoplasmic; that stretch reads PTLNMLIKIIGNSVGALG. The chain crosses the membrane as a helical span at residues 884 to 904; it reads NLTLVLAIIVFIFAVVGMQLF. Topologically, residues 905–929 are extracellular; the sequence is GKSYKECVCKINDDCTLPRWHMNDF. Cys-913 and Cys-919 form a disulfide bridge. Residues 930–945 constitute an intramembrane region (pore-forming); sequence FHSFLIVFRVLCGEWI. At 946–956 the chain is on the extracellular side; that stretch reads ETMWDCMEVAG. Cys-951 and Cys-960 are joined by a disulfide. The helical transmembrane segment at 957–983 threads the bilayer; that stretch reads QTMCLIVFMLVMVIGNLVVLNLFLALL. Residues 984–1205 are Cytoplasmic-facing; that stretch reads LSSFSSDNLA…RKTCYSIVEH (222 aa). The interval 1118-1162 is disordered; that stretch reads EEFSSESELEESKEKLNATSSSEGSTVDVVLPREGEQAETEPEED. Residues 1188-1499 form an III repeat; that stretch reads KGKIWWNLRK…KKYYNAMKKL (312 aa). A helical transmembrane segment spans residues 1206–1226; sequence NWFETFIVFMILLSSGALAFE. Residues 1227-1238 lie on the Extracellular side of the membrane; that stretch reads DIYIEQRKTIKT. The helical transmembrane segment at 1239–1260 threads the bilayer; sequence MLEYADKVFTYIFILEMLLKWV. Residues 1261–1266 lie on the Cytoplasmic side of the membrane; it reads AYGFQT. Residues 1267 to 1292 traverse the membrane as a helical segment; the sequence is YFTNAWCWLDFLIVDVSLVSLVANAL. The Extracellular portion of the chain corresponds to 1293 to 1301; that stretch reads GYSELGAIK. A helical transmembrane segment spans residues 1302–1320; sequence SLRTLRALRPLRALSRFEG. The Cytoplasmic segment spans residues 1321–1333; sequence MRVVVNALVGAIP. The helical transmembrane segment at 1334 to 1356 threads the bilayer; sequence SIMNVLLVCLIFWLIFSIMGVNL. At 1357 to 1402 the chain is on the extracellular side; sequence FAGKFYHCVNMTTGNMFDISDVNNLSDCQALGKQARWKNVKVNFDN. A disulfide bridge connects residues Cys-1364 and Cys-1384. N-linked (GlcNAc...) asparagine glycans are attached at residues Asn-1366 and Asn-1380. Positions 1403–1419 form an intramembrane region, pore-forming; the sequence is VGAGYLALLQVATFKGW. At 1420 to 1442 the chain is on the extracellular side; that stretch reads MDIMYAAVDSRDVKLQPVYEENL. The helical transmembrane segment at 1443–1468 threads the bilayer; sequence YMYLYFVIFIIFGSFFTLNLFIGVII. Topologically, residues 1469 to 1526 are cytoplasmic; it reads DNFNQQKKKFGGQDIFMTEEQKKYYNAMKKLGSKKPQKPIPRPANKFQGMVFDFVTRQ. Ser-1501 carries the phosphoserine; by PKC modification. Residues 1508-1806 form an IV repeat; sequence IPRPANKFQG…WEKFDPDATQ (299 aa). The chain crosses the membrane as a helical span at residues 1527 to 1545; that stretch reads VFDISIMILICLNMVTMMV. Topologically, residues 1546–1553 are extracellular; it reads ETDDQGKY. The chain crosses the membrane as a helical span at residues 1554-1577; it reads MTLVLSRINLVFIVLFTGEFVLKL. The Cytoplasmic segment spans residues 1578–1587; sequence VSLRHYYFTI. Residues 1588 to 1605 form a helical membrane-spanning segment; the sequence is GWNIFDFVVVILSIVGMF. Over 1606-1617 the chain is Extracellular; that stretch reads LAEMIEKYFVSP. The helical transmembrane segment at 1618–1640 threads the bilayer; the sequence is TLFRVIRLARIGRILRLIKGAKG. Over 1641–1653 the chain is Cytoplasmic; it reads IRTLLFALMMSLP. Residues 1654 to 1677 traverse the membrane as a helical segment; it reads ALFNIGLLLFLVMFIYAIFGMSNF. The Extracellular portion of the chain corresponds to 1678 to 1699; it reads AYVKKEAGIDDMFNFETFGNSM. An intramembrane region (pore-forming) is located at residues 1700–1712; the sequence is ICLFQITTSAGWD. Topologically, residues 1713–1744 are extracellular; it reads GLLAPILNSAPPDCDPDTIHPGSSVKGDCGNP. The helical transmembrane segment at 1745–1770 threads the bilayer; it reads SVGIFFFVSYIIISFLVVVNMYIAVI. Residues 1771–2000 lie on the Cytoplasmic side of the membrane; sequence LENFSVATEE…KGKEVRENQK (230 aa). The region spanning 1900 to 1929 is the IQ domain; sequence EEVSAAIIQRNFRCYLLKQRLKNISSNYNK. The disordered stretch occupies residues 1949–2000; the sequence is LNGNSTPEKTDGSSSTTSPPSYDSVTKPDKEKFEKDKPEKESKGKEVRENQK. Residues 1974 to 2000 are compositionally biased toward basic and acidic residues; the sequence is TKPDKEKFEKDKPEKESKGKEVRENQK.

It belongs to the sodium channel (TC 1.A.1.10) family. Nav1.3/SCN3A subfamily. In terms of assembly, heterooligomer of an alpha subunit, SCN3A, and 1 to 3 regulatory beta subunits including SCN1B and SCN2B; disulfide-linked with some beta subunits like SCN2B. Interacts with NEDD4L; could regulate expression of SCN3A at the plasma membrane through ubiquitination-regulated endocytosis. Interacts with the conotoxin GVIIJ. In terms of processing, may be ubiquitinated by NEDD4L; which would promote its endocytosis. Phosphorylation at Ser-1501 by PKC in a highly conserved cytoplasmic loop slows inactivation of the sodium channel and reduces peak sodium currents. In terms of tissue distribution, expressed in enterochromaffin cells in both colon and small bowel (at protein level).

It is found in the cell membrane. The protein localises to the basal cell membrane. The catalysed reaction is Na(+)(in) = Na(+)(out). Its function is as follows. Pore-forming subunit of Nav1.3, a voltage-gated sodium (Nav) channel that directly mediates the depolarizing phase of action potentials in excitable membranes. Navs, also called VGSCs (voltage-gated sodium channels) or VDSCs (voltage-dependent sodium channels), operate by switching between closed and open conformations depending on the voltage difference across the membrane. In the open conformation they allow Na(+) ions to selectively pass through the pore, along their electrochemical gradient. The influx of Na+ ions provokes membrane depolarization, initiating the propagation of electrical signals throughout cells and tissues. In some secretory cell types, it also participates in cell excitability through membrane depolarization and regulates cells responsiveness to stimuli triggering secretion. For instance, it controls the release of serotonin/5-hydroxytryptamine by enterochromaffin cells and is required for both glucagon- and glucose-induced insulin secretion in pancreatic endocrine cells. The chain is Sodium channel protein type 3 subunit alpha from Homo sapiens (Human).